Consider the following 93-residue polypeptide: Cell division protein CrgA (93 aa).

2 consecutive transmembrane segments (helical) span residues 31 to 51 and 70 to 90; these read VWFV…LMVF and LGPW…LLTM.

The protein belongs to the CrgA family.

The protein localises to the cell membrane. Involved in cell division. This is Cell division protein CrgA from Mycobacterium marinum (strain ATCC BAA-535 / M).